The primary structure comprises 465 residues: Ribosomal oxygenase 2 (465 aa).

A JmjC domain is found at 139-271 (QPQRFKDELW…NSWGDFLLDT (133 aa)). Positions 179, 181, and 240 each coordinate Fe cation. Phosphoserine is present on serine 309.

It belongs to the ROX family. MINA53 subfamily. Requires Fe(2+) as cofactor.

It localises to the nucleus. It is found in the nucleolus. The catalysed reaction is L-histidyl-[ribosomal protein uL15] + 2-oxoglutarate + O2 = (3S)-3-hydroxy-L-histidyl-[ribosomal protein uL15] + succinate + CO2. The enzyme catalyses L-histidyl-[protein] + 2-oxoglutarate + O2 = (3S)-3-hydroxy-L-histidyl-[protein] + succinate + CO2. Oxygenase that can act as both a histone lysine demethylase and a ribosomal histidine hydroxylase. Is involved in the demethylation of trimethylated 'Lys-9' on histone H3 (H3K9me3), leading to an increase in ribosomal RNA expression. Also catalyzes the hydroxylation of 60S ribosomal protein L27a on 'His-39'. May play an important role in cell growth and survival. May be involved in ribosome biogenesis, most likely during the assembly process of pre-ribosomal particles. This Pongo abelii (Sumatran orangutan) protein is Ribosomal oxygenase 2 (RIOX2).